We begin with the raw amino-acid sequence, 230 residues long: Claudin-2 (230 aa).

Residues 1 to 7 lie on the Cytoplasmic side of the membrane; that stretch reads MASLGLQ. Residues 8-28 form a helical membrane-spanning segment; that stretch reads LVGYILGLLGLLGTLVAMLLP. At 29 to 81 the chain is on the extracellular side; the sequence is SWKTSSYVGASIVTAVGFSKGLWMECATHSTGITQCDIYSTLLGLPADIQAAQ. The cysteines at positions 54 and 64 are disulfide-linked. A helical membrane pass occupies residues 82 to 102; that stretch reads AMMVTSSAISSLACIISVVGM. Residues 103 to 116 lie on the Cytoplasmic side of the membrane; the sequence is RCTVFCQESRAKDR. A helical transmembrane segment spans residues 117 to 137; sequence VAVAGGVFFILGGLLGFIPVA. Over 138–162 the chain is Extracellular; it reads WNLHGILRDFYSPLVPDSMKFEIGE. Residues 163 to 183 form a helical membrane-spanning segment; that stretch reads ALYLGIISSLFSLIAGIILCF. Residues 184-230 lie on the Cytoplasmic side of the membrane; that stretch reads SCSSQRNRSNYYDAYQAQPLATRSSPRPGQPPKVKSEFNSYSLTGYV. The interval 205–230 is disordered; the sequence is TRSSPRPGQPPKVKSEFNSYSLTGYV. Residue Lys218 forms a Glycyl lysine isopeptide (Lys-Gly) (interchain with G-Cter in SUMO) linkage. A phosphoserine mark is found at Ser219 and Ser223. The span at 220 to 230 shows a compositional bias: polar residues; sequence EFNSYSLTGYV. The interval 229 to 230 is interactions with TJP1, TJP2 and TJP3; sequence YV.

The protein belongs to the claudin family. Can form homo- and heteropolymers with other claudins to mediate paracellular barrier and channel functions of tight junctions in response to physiological stimuli. Homopolymers interact with CLDN3, but not CLDN1, homopolymers. Directly interacts with TJP1/ZO-1, TJP2/ZO-2 and TJP3/ZO-3. Post-translationally, the disulfide bond is necessary for pore formation, but is not required for correct protein trafficking.

It localises to the cell junction. Its subcellular location is the tight junction. It is found in the cell membrane. The enzyme catalyses Na(+)(in) = Na(+)(out). The catalysed reaction is K(+)(in) = K(+)(out). It carries out the reaction Rb(+)(in) = Rb(+)(out). It catalyses the reaction Li(+)(in) = Li(+)(out). The enzyme catalyses Cs(+)(in) = Cs(+)(out). The catalysed reaction is Ca(2+)(in) = Ca(2+)(out). It carries out the reaction methylamine(out) = methylamine(in). It catalyses the reaction choline(out) = choline(in). The enzyme catalyses H2O(in) = H2O(out). Forms paracellular channels: polymerizes in tight junction strands with cation- and water-selective channels through the strands, conveying epithelial permeability in a process known as paracellular tight junction permeability. In intestinal epithelium, allows for sodium and water fluxes from the peritoneal side to the lumen of the intestine to regulate nutrient absorption and clear enteric pathogens as part of mucosal immune response. In kidney, allows passive sodium and calcium reabsorption across proximal tubules from the lumen back to the bloodstream. In the hepatobiliary tract, allows paracellular water and cation fluxes in the hepatic perivenous areas and biliary epithelium to generate bile flow and maintain osmotic gradients. The polypeptide is Claudin-2 (Homo sapiens (Human)).